The chain runs to 228 residues: Cytochrome c oxidase subunit 2 (228 aa).

The Mitochondrial intermembrane segment spans residues 1–26; sequence MATWANLGLQNSSSPLMEQLNFFHDH. A helical membrane pass occupies residues 27–48; that stretch reads TVLILIMITVMITYVMGMLFFN. Over 49 to 62 the chain is Mitochondrial matrix; that stretch reads KFTNRYLLHGQTIE. A helical membrane pass occupies residues 63-82; the sequence is IIWTILPAIILMFIAFPSLR. The Mitochondrial intermembrane portion of the chain corresponds to 83-228; sequence LLYLLDEINS…FIKWVSSQLN (146 aa). Cu cation contacts are provided by His-161, Cys-196, Glu-198, Cys-200, His-204, and Met-207. Position 198 (Glu-198) interacts with Mg(2+).

Belongs to the cytochrome c oxidase subunit 2 family. In terms of assembly, component of the cytochrome c oxidase (complex IV, CIV), a multisubunit enzyme composed of a catalytic core of 3 subunits and several supernumerary subunits. The complex exists as a monomer or a dimer and forms supercomplexes (SCs) in the inner mitochondrial membrane with ubiquinol-cytochrome c oxidoreductase (cytochrome b-c1 complex, complex III, CIII). The cofactor is Cu cation.

The protein localises to the mitochondrion inner membrane. It carries out the reaction 4 Fe(II)-[cytochrome c] + O2 + 8 H(+)(in) = 4 Fe(III)-[cytochrome c] + 2 H2O + 4 H(+)(out). In terms of biological role, component of the cytochrome c oxidase, the last enzyme in the mitochondrial electron transport chain which drives oxidative phosphorylation. The respiratory chain contains 3 multisubunit complexes succinate dehydrogenase (complex II, CII), ubiquinol-cytochrome c oxidoreductase (cytochrome b-c1 complex, complex III, CIII) and cytochrome c oxidase (complex IV, CIV), that cooperate to transfer electrons derived from NADH and succinate to molecular oxygen, creating an electrochemical gradient over the inner membrane that drives transmembrane transport and the ATP synthase. Cytochrome c oxidase is the component of the respiratory chain that catalyzes the reduction of oxygen to water. Electrons originating from reduced cytochrome c in the intermembrane space (IMS) are transferred via the dinuclear copper A center (CU(A)) of subunit 2 and heme A of subunit 1 to the active site in subunit 1, a binuclear center (BNC) formed by heme A3 and copper B (CU(B)). The BNC reduces molecular oxygen to 2 water molecules using 4 electrons from cytochrome c in the IMS and 4 protons from the mitochondrial matrix. The sequence is that of Cytochrome c oxidase subunit 2 (COII) from Culex quinquefasciatus (Southern house mosquito).